The sequence spans 411 residues: Serine hydroxymethyltransferase (411 aa).

120-122 (GHL) provides a ligand contact to (6S)-5,6,7,8-tetrahydrofolate. Lys-225 is subject to N6-(pyridoxal phosphate)lysine. 350 to 352 (SPF) is a (6S)-5,6,7,8-tetrahydrofolate binding site.

This sequence belongs to the SHMT family. Homodimer. The cofactor is pyridoxal 5'-phosphate.

It is found in the cytoplasm. It carries out the reaction (6R)-5,10-methylene-5,6,7,8-tetrahydrofolate + glycine + H2O = (6S)-5,6,7,8-tetrahydrofolate + L-serine. Its pathway is one-carbon metabolism; tetrahydrofolate interconversion. The protein operates within amino-acid biosynthesis; glycine biosynthesis; glycine from L-serine: step 1/1. Functionally, catalyzes the reversible interconversion of serine and glycine with tetrahydrofolate (THF) serving as the one-carbon carrier. This reaction serves as the major source of one-carbon groups required for the biosynthesis of purines, thymidylate, methionine, and other important biomolecules. Also exhibits THF-independent aldolase activity toward beta-hydroxyamino acids, producing glycine and aldehydes, via a retro-aldol mechanism. The protein is Serine hydroxymethyltransferase of Lactobacillus gasseri (strain ATCC 33323 / DSM 20243 / BCRC 14619 / CIP 102991 / JCM 1131 / KCTC 3163 / NCIMB 11718 / NCTC 13722 / AM63).